The following is a 20-amino-acid chain: Short cationic peptide-4a (20 aa).

Glu20 bears the Glutamic acid 1-amide mark.

Expressed by the venom gland.

The protein resides in the secreted. The protein is Short cationic peptide-4a of Cupiennius salei (American wandering spider).